The sequence spans 202 residues: 7-methyl-GTP pyrophosphatase (202 aa).

Catalysis depends on aspartate 70, which acts as the Proton acceptor.

It belongs to the Maf family. YceF subfamily. A divalent metal cation is required as a cofactor.

It localises to the cytoplasm. The catalysed reaction is N(7)-methyl-GTP + H2O = N(7)-methyl-GMP + diphosphate + H(+). Its function is as follows. Nucleoside triphosphate pyrophosphatase that hydrolyzes 7-methyl-GTP (m(7)GTP). May have a dual role in cell division arrest and in preventing the incorporation of modified nucleotides into cellular nucleic acids. This chain is 7-methyl-GTP pyrophosphatase, found in Pseudoalteromonas translucida (strain TAC 125).